The sequence spans 414 residues: Serine--tRNA ligase (414 aa).

230 to 232 serves as a coordination point for L-serine; sequence TSE. 261-263 contacts ATP; that stretch reads RQE. An L-serine-binding site is contributed by Glu284. An ATP-binding site is contributed by 348-351; sequence EISS. Residue Ser382 participates in L-serine binding.

This sequence belongs to the class-II aminoacyl-tRNA synthetase family. Type-1 seryl-tRNA synthetase subfamily. Homodimer. The tRNA molecule binds across the dimer.

The protein localises to the cytoplasm. It catalyses the reaction tRNA(Ser) + L-serine + ATP = L-seryl-tRNA(Ser) + AMP + diphosphate + H(+). The catalysed reaction is tRNA(Sec) + L-serine + ATP = L-seryl-tRNA(Sec) + AMP + diphosphate + H(+). The protein operates within aminoacyl-tRNA biosynthesis; selenocysteinyl-tRNA(Sec) biosynthesis; L-seryl-tRNA(Sec) from L-serine and tRNA(Sec): step 1/1. Catalyzes the attachment of serine to tRNA(Ser). Is also able to aminoacylate tRNA(Sec) with serine, to form the misacylated tRNA L-seryl-tRNA(Sec), which will be further converted into selenocysteinyl-tRNA(Sec). The chain is Serine--tRNA ligase from Campylobacter fetus subsp. fetus (strain 82-40).